A 246-amino-acid polypeptide reads, in one-letter code: Small ribosomal subunit protein uS2 (246 aa).

This sequence belongs to the universal ribosomal protein uS2 family.

This chain is Small ribosomal subunit protein uS2, found in Burkholderia pseudomallei (strain 668).